Consider the following 535-residue polypeptide: CTP synthase (535 aa).

Residues 1–267 (MTKYIFVTGG…DQIVLDHFGV (267 aa)) form an amidoligase domain region. CTP is bound at residue Ser13. Residue Ser13 coordinates UTP. 14 to 19 (SLGKGI) serves as a coordination point for ATP. Tyr54 is a binding site for L-glutamine. Asp71 is an ATP binding site. The Mg(2+) site is built by Asp71 and Glu141. CTP-binding positions include 148–150 (DIE), 188–193 (KTKPTQ), and Lys224. Residues 188–193 (KTKPTQ) and Lys224 contribute to the UTP site. The Glutamine amidotransferase type-1 domain occupies 292–535 (KIALVGKYVA…VAAASREVKD (244 aa)). Residue Gly354 coordinates L-glutamine. Cys381 serves as the catalytic Nucleophile; for glutamine hydrolysis. L-glutamine-binding positions include 382–385 (LGMQ), Glu405, and Arg463. Active-site residues include His508 and Glu510.

This sequence belongs to the CTP synthase family. In terms of assembly, homotetramer.

The enzyme catalyses UTP + L-glutamine + ATP + H2O = CTP + L-glutamate + ADP + phosphate + 2 H(+). It carries out the reaction L-glutamine + H2O = L-glutamate + NH4(+). The catalysed reaction is UTP + NH4(+) + ATP = CTP + ADP + phosphate + 2 H(+). It functions in the pathway pyrimidine metabolism; CTP biosynthesis via de novo pathway; CTP from UDP: step 2/2. Allosterically activated by GTP, when glutamine is the substrate; GTP has no effect on the reaction when ammonia is the substrate. The allosteric effector GTP functions by stabilizing the protein conformation that binds the tetrahedral intermediate(s) formed during glutamine hydrolysis. Inhibited by the product CTP, via allosteric rather than competitive inhibition. In terms of biological role, catalyzes the ATP-dependent amination of UTP to CTP with either L-glutamine or ammonia as the source of nitrogen. Regulates intracellular CTP levels through interactions with the four ribonucleotide triphosphates. This chain is CTP synthase, found in Levilactobacillus brevis (strain ATCC 367 / BCRC 12310 / CIP 105137 / JCM 1170 / LMG 11437 / NCIMB 947 / NCTC 947) (Lactobacillus brevis).